Reading from the N-terminus, the 215-residue chain is FMN-dependent NADH:quinone oxidoreductase (215 aa).

17–19 (SAS) contacts FMN.

The protein belongs to the azoreductase type 1 family. As to quaternary structure, homodimer. The cofactor is FMN.

The catalysed reaction is 2 a quinone + NADH + H(+) = 2 a 1,4-benzosemiquinone + NAD(+). The enzyme catalyses N,N-dimethyl-1,4-phenylenediamine + anthranilate + 2 NAD(+) = 2-(4-dimethylaminophenyl)diazenylbenzoate + 2 NADH + 2 H(+). Quinone reductase that provides resistance to thiol-specific stress caused by electrophilic quinones. Its function is as follows. Also exhibits azoreductase activity. Catalyzes the reductive cleavage of the azo bond in aromatic azo compounds to the corresponding amines. The sequence is that of FMN-dependent NADH:quinone oxidoreductase from Clostridium botulinum (strain Eklund 17B / Type B).